Here is a 111-residue protein sequence, read N- to C-terminus: Probable 4-amino-4-deoxy-L-arabinose-phosphoundecaprenol flippase subunit ArnE (111 aa).

Helical transmembrane passes span 38 to 58 (LWLG…LLVL), 61 to 81 (LPVG…TLAA), and 91 to 111 (PRHW…GSAA). The 70-residue stretch at 40–109 (LGLALICMGA…IISGIIILGS (70 aa)) folds into the EamA domain.

This sequence belongs to the ArnE family. In terms of assembly, heterodimer of ArnE and ArnF.

Its subcellular location is the cell inner membrane. It participates in bacterial outer membrane biogenesis; lipopolysaccharide biosynthesis. In terms of biological role, translocates 4-amino-4-deoxy-L-arabinose-phosphoundecaprenol (alpha-L-Ara4N-phosphoundecaprenol) from the cytoplasmic to the periplasmic side of the inner membrane. The protein is Probable 4-amino-4-deoxy-L-arabinose-phosphoundecaprenol flippase subunit ArnE of Salmonella choleraesuis (strain SC-B67).